The sequence spans 201 residues: Rho GDP-dissociation inhibitor 2 (201 aa).

The segment at 1 to 38 is disordered; it reads MTEKAPEPHVEEDDDDELDSKLNYKPPPQKSLKELQEM. T2 is modified (N-acetylthreonine). K21 is modified (N6-acetyllysine). Y24 bears the Phosphotyrosine mark. An N6-acetyllysine mark is found at K25, K40, K47, K102, and K124. Residue S145 is modified to Phosphoserine. K175 carries the post-translational modification N6-acetyllysine.

It belongs to the Rho GDI family. Interacts with RHOA. Interacts with RAC1. Interacts with RAC2. Interacts with CDC42. As to expression, detected in bone marrow, thymus and spleen.

The protein localises to the cytoplasm. It localises to the cytosol. Its function is as follows. Regulates the GDP/GTP exchange reaction of the Rho proteins by inhibiting the dissociation of GDP from them, and the subsequent binding of GTP to them. Regulates reorganization of the actin cytoskeleton mediated by Rho family members. The protein is Rho GDP-dissociation inhibitor 2 (ARHGDIB) of Homo sapiens (Human).